The sequence spans 516 residues: Gastrula zinc finger protein XlCGF53.1 (516 aa).

2 disordered regions span residues M1–E33 and G200–P220. Polar residues predominate over residues G200–D218. 7 C2H2-type zinc fingers span residues Y312 to H334, F354 to H376, Y382 to H404, F410 to H432, Y438 to H460, F466 to H488, and F494 to H516.

The protein belongs to the krueppel C2H2-type zinc-finger protein family.

The protein resides in the nucleus. Functionally, may be involved in transcriptional regulation. In Xenopus laevis (African clawed frog), this protein is Gastrula zinc finger protein XlCGF53.1.